The primary structure comprises 364 residues: DNA polymerase IV (364 aa).

Residues isoleucine 14 to glycine 198 enclose the UmuC domain. Mg(2+) is bound by residues aspartate 18 and aspartate 116. Glutamate 117 is an active-site residue.

The protein belongs to the DNA polymerase type-Y family. In terms of assembly, monomer. Mg(2+) is required as a cofactor.

The protein resides in the cytoplasm. It catalyses the reaction DNA(n) + a 2'-deoxyribonucleoside 5'-triphosphate = DNA(n+1) + diphosphate. Functionally, poorly processive, error-prone DNA polymerase involved in untargeted mutagenesis. Copies undamaged DNA at stalled replication forks, which arise in vivo from mismatched or misaligned primer ends. These misaligned primers can be extended by PolIV. Exhibits no 3'-5' exonuclease (proofreading) activity. May be involved in translesional synthesis, in conjunction with the beta clamp from PolIII. The polypeptide is DNA polymerase IV (Streptococcus agalactiae serotype Ia (strain ATCC 27591 / A909 / CDC SS700)).